Reading from the N-terminus, the 177-residue chain is Anditomin synthesis protein L (177 aa).

A run of 2 helical transmembrane segments spans residues 54-74 and 117-137; these read VVNS…PFIM and IVNF…YMVF. Residue Asn165 is glycosylated (N-linked (GlcNAc...) asparagine).

It is found in the membrane. The protein operates within secondary metabolite biosynthesis; terpenoid biosynthesis. Its function is as follows. Part of the gene cluster that mediates the biosynthesis of anditomin, a fungal meroterpenoid. The first step of the pathway is the synthesis of 3,5-dimethylorsellinic acid (DMOA) by the polyketide synthase andM. DMOA is then converted to the phthalide compound 5,7-dihydroxy-4,6-dimethylphthalide (DHDMP) by the cytochrome P450 monooxygenase andK, which is further prenylated by the prenyltransferase andD to yield farnesyl-DHDMP. Further epoxidation by the FAD-dependent monooxygenase andE leads to epoxyfarnesyl-DHDMP. The next step involves the terpene cyclase andB that converts epoxyfarnesyl-DHDMP into preandiloid A through opening of the epoxide ring followed by the cyclization of the farnesyl moiety. Preandiloid A is in turn oxidized at the C-3 hydroxyl group to yield preandiloid B by the dehydrogenase andC. The dioxygenase andA is solely responsible for the dehydrogenation of preandiloid B leading to the enone preandiloid C, as well as for the intriguing structural rearrangement to generate the bicyclo[2.2.2]octane core, transforming preandiloid C into andiconin. FAD-binding monooxygenase andJ then produces andilesin D which is reduced by dehydrogenase andI to yield andilesin A. Action of acetyltransferase andG followed by a spontaneous acetate elimination leads then to andilesin B, which is in turn substrate of the short chain dehydrogenase andH to yield andilesin C. Finally, the dioxygenase andF catalyzes the transformation of andilesin C to anditomin. The exact role of andL within the anditomin biosynthetic pathway has not been identified yet. In Emericella variicolor (Aspergillus stellatus), this protein is Anditomin synthesis protein L.